A 126-amino-acid polypeptide reads, in one-letter code: Holo-[acyl-carrier-protein] synthase (126 aa).

Residues Asp-9 and Glu-58 each contribute to the Mg(2+) site.

It belongs to the P-Pant transferase superfamily. AcpS family. Mg(2+) is required as a cofactor.

Its subcellular location is the cytoplasm. It catalyses the reaction apo-[ACP] + CoA = holo-[ACP] + adenosine 3',5'-bisphosphate + H(+). Transfers the 4'-phosphopantetheine moiety from coenzyme A to a Ser of acyl-carrier-protein. The sequence is that of Holo-[acyl-carrier-protein] synthase from Pectobacterium carotovorum subsp. carotovorum (strain PC1).